Consider the following 611-residue polypeptide: Nuclear cap-binding protein subunit 3 (611 aa).

The interval 1 to 44 is disordered; it reads MAAVRGLRVSVKAGGGAEPEPMEVEEGEVEAAADRASPREVVSG. Residues 20 to 31 show a composition bias toward acidic residues; that stretch reads EPMEVEEGEVEA. The segment at 108–169 is RNA recognition motif (RRM) domain; it reads ETLYVYGVDD…LSSMPTNEKG (62 aa). A WLDD motif; essential for 7-methylguanosine-containing mRNA cap binding motif is present at residues 137 to 140; the sequence is WLDD. Disordered stretches follow at residues 159–230, 338–360, 373–393, 423–568, and 583–611; these read NLSS…PDTL, EEPI…DDRV, RERE…EMDY, KTIR…DSVL, and RQKK…DTDS. Residues 168–179 show a composition bias toward basic and acidic residues; it reads KGQRKKDGEHSS. 2 stretches are compositionally biased toward acidic residues: residues 196 to 218 and 339 to 358; these read DETE…DETE and EPIE…DEDD. Positions 423-439 are enriched in polar residues; sequence KTIRNSMRSDSVGNSVK. A compositionally biased stretch (basic and acidic residues) spans 446 to 463; sequence SHAEKPADVRLILEEKRQ. Low complexity predominate over residues 464-475; the sequence is STASRQQSSSGK. Composition is skewed to basic and acidic residues over residues 501–511 and 544–556; these read SRREPLSDVHS and PKDK…KSEK. Over residues 602–611 the composition is skewed to low complexity; the sequence is ESSSGSDTDS.

It belongs to the NCBP3 family. As to quaternary structure, component of an alternative cap-binding complex (CBC) composed of NCBP1/CBP80 and NCBP3.

Its subcellular location is the nucleus. The protein localises to the cytoplasm. Associates with NCBP1/CBP80 to form an alternative cap-binding complex (CBC) which plays a key role in mRNA export. NCBP3 serves as adapter protein linking the capped RNAs (m7GpppG-capped RNA) to NCBP1/CBP80. Unlike the conventional CBC with NCBP2 which binds both small nuclear RNA (snRNA) and messenger (mRNA) and is involved in their export from the nucleus, the alternative CBC with NCBP3 does not bind snRNA and associates only with mRNA thereby playing a role in only mRNA export. The protein is Nuclear cap-binding protein subunit 3 of Xenopus tropicalis (Western clawed frog).